A 1039-amino-acid polypeptide reads, in one-letter code: RNA-binding protein Unr (1039 aa).

Over residues 49–62 the composition is skewed to polar residues; sequence TTLGLQPQGQGPSP. Disordered regions lie at residues 49–126 and 165–184; these read TTLG…QQQH and SIFG…PSQT. 3 stretches are compositionally biased toward low complexity: residues 63-80, 89-126, and 165-182; these read QQQQ…QHQQ, QQHM…QQQH, and SIFG…ADPS. Residues 186–250 form the CSD 1 domain; the sequence is RETGIIEKLL…GKPIASQVSK (65 aa). Residues 261 to 337 form the CSD 2; degenerate domain; sequence RVTGTVTTEL…GNLGACHIRL (77 aa). One can recognise a CSD 3 domain in the interval 345 to 413; sequence KYRGVVCSMK…GREFACNITR (69 aa). A CSD 4; degenerate domain is found at 428–503; it reads VYKGQVLKSL…RDQLQRATSI (76 aa). A CSD 5 domain is found at 517–585; it reads REQGTIASLK…SRLQAIRIKH (69 aa). One can recognise a CSD 6; degenerate domain in the interval 593-673; it reads FETLVASNIE…KECIAVNVQQ (81 aa). A disordered region spans residues 721–741; it reads QNGYVMHGSPGGSTSSVGSNN. Over residues 732 to 741 the composition is skewed to low complexity; sequence GSTSSVGSNN. Positions 763 to 831 constitute a CSD 7 domain; the sequence is VYRGFIAVMK…NCLPAENVRM (69 aa). Positions 846 to 919 constitute a CSD 8; degenerate domain; it reads THNGVVARPL…SGRAACVNAV (74 aa). In terms of domain architecture, CSD 9 spans 922-987; that stretch reads KKRATVDSIK…GKSSACNVLK (66 aa).

The protein belongs to the UNR family. In terms of assembly, interacts with Sxl; cooperates with Sxl to prevent translation of msl-2 transcripts. Interacts with mle; promoting association between mle and roX2 non-coding RNA. Interacts (via CSD domain 7-9) with pAbp; promoting translation inhibition of msl-2 transcripts.

It localises to the cytoplasm. In terms of biological role, RNA-binding protein that acts as a regulator of dosage compensation in both males and females. In males, acts as positive regulator of dosage compensation by promoting assembly of the MSL complex, a multiprotein complex that mediates X-chromosome dosage compensation. Promotes MSL complex assembly via association with roX1 and roX2 non-coding RNA components of the MSL complex, facilitating the interaction between non-coding RNAs and mle. In females, acts as an inhibitor of dosage compensation together with Sxl by preventing production of msl-2 protein, an essential component of the MSL complex. Specifically binds to the 3'-UTR of msl-2 transcripts, and cooperates with Sxl to prevent translation initiation of msl-2 transcripts. Mechanistically, Sxl and Unr inhibit translation initiation by preventing ribosome recruitment after pAbp-mediated recruitment of the eIF4F complex. This Drosophila melanogaster (Fruit fly) protein is RNA-binding protein Unr.